Here is a 394-residue protein sequence, read N- to C-terminus: Phosphoglycerate kinase (394 aa).

Substrate-binding positions include 21 to 23, arginine 37, 60 to 63, arginine 119, and arginine 152; these read DFN and HLGR. Residues lysine 202, glycine 293, glutamate 324, and 350–353 each bind ATP; that span reads GGDS.

This sequence belongs to the phosphoglycerate kinase family. Monomer.

It is found in the cytoplasm. The enzyme catalyses (2R)-3-phosphoglycerate + ATP = (2R)-3-phospho-glyceroyl phosphate + ADP. It participates in carbohydrate degradation; glycolysis; pyruvate from D-glyceraldehyde 3-phosphate: step 2/5. The protein is Phosphoglycerate kinase of Caldanaerobacter subterraneus subsp. tengcongensis (strain DSM 15242 / JCM 11007 / NBRC 100824 / MB4) (Thermoanaerobacter tengcongensis).